The chain runs to 231 residues: Potassium/proton antiporter CemA (231 aa).

4 helical membrane passes run 7-27 (FIPLLCLTSIVFLPWCISFTF), 104-124 (IHTILHFCTNIICFLILSVYS), 154-174 (ILFLIEFCVGYHSTGGWELMI), and 189-209 (IISFLVSILPAILDTIFKYWI).

The protein belongs to the CemA family.

It is found in the plastid. The protein resides in the chloroplast inner membrane. The enzyme catalyses K(+)(in) + H(+)(out) = K(+)(out) + H(+)(in). Functionally, contributes to K(+)/H(+) antiport activity by supporting proton efflux to control proton extrusion and homeostasis in chloroplasts in a light-dependent manner to modulate photosynthesis. Prevents excessive induction of non-photochemical quenching (NPQ) under continuous-light conditions. Indirectly promotes efficient inorganic carbon uptake into chloroplasts. The sequence is that of Potassium/proton antiporter CemA from Pisum sativum (Garden pea).